Here is a 95-residue protein sequence, read N- to C-terminus: Gas vesicle protein S (95 aa).

This sequence belongs to the gas vesicle GvpA family.

It localises to the gas vesicle. In terms of biological role, probably a minor component of the gas vesicle. It is not clear what function gas vesicles perform in soil bacteria. When a minimal gvp locus (gvpA2-gvpR-gvpN-gvpF-gvpG-gvpL-gvpS-gvpK-gvpJ-gvpT-gvpU, called pNL29) is expressed in E.coli gas vesicles are made. The protein is Gas vesicle protein S of Priestia megaterium (Bacillus megaterium).